A 367-amino-acid polypeptide reads, in one-letter code: Flagellar P-ring protein (367 aa).

The first 21 residues, 1–21 (MYVFKALAGIVLALVATLAHA), serve as a signal peptide directing secretion.

It belongs to the FlgI family. The basal body constitutes a major portion of the flagellar organelle and consists of four rings (L,P,S, and M) mounted on a central rod.

The protein resides in the periplasm. It is found in the bacterial flagellum basal body. Its function is as follows. Assembles around the rod to form the L-ring and probably protects the motor/basal body from shearing forces during rotation. The protein is Flagellar P-ring protein of Salmonella choleraesuis (strain SC-B67).